The sequence spans 173 residues: VQAIYVPADDLTDPAPATTFAHLDATTVLSRQISELGIYPAVDPLDSTSRMLSPHILGEEHYNTARGVQKVLQNYKNLQDIIAILGMDELSEDDKLTVARARKIQRFLSQPFHVAEVFTGAPGKYVDLKESITSFQGVLDGKFDDLPEQSFYMVGGIEEVIAKAEKISKESAA.

It belongs to the ATPase alpha/beta chains family. In terms of assembly, F-type ATPases have 2 components, CF(1) - the catalytic core - and CF(0) - the membrane proton channel. CF(1) has five subunits: alpha(3), beta(3), gamma(1), delta(1), epsilon(1). CF(0) has three main subunits: a, b and c.

It is found in the mitochondrion. It localises to the mitochondrion inner membrane. It carries out the reaction ATP + H2O + 4 H(+)(in) = ADP + phosphate + 5 H(+)(out). Functionally, mitochondrial membrane ATP synthase (F(1)F(0) ATP synthase or Complex V) produces ATP from ADP in the presence of a proton gradient across the membrane which is generated by electron transport complexes of the respiratory chain. F-type ATPases consist of two structural domains, F(1) - containing the extramembraneous catalytic core and F(0) - containing the membrane proton channel, linked together by a central stalk and a peripheral stalk. During catalysis, ATP synthesis in the catalytic domain of F(1) is coupled via a rotary mechanism of the central stalk subunits to proton translocation. Subunits alpha and beta form the catalytic core in F(1). Rotation of the central stalk against the surrounding alpha(3)beta(3) subunits leads to hydrolysis of ATP in three separate catalytic sites on the beta subunits. The chain is ATP synthase subunit beta, mitochondrial (ATPB) from Actinidia deliciosa (Kiwi).